Consider the following 349-residue polypeptide: Phosphoribosylformylglycinamidine cyclo-ligase (349 aa).

Belongs to the AIR synthase family.

The protein localises to the cytoplasm. The enzyme catalyses 2-formamido-N(1)-(5-O-phospho-beta-D-ribosyl)acetamidine + ATP = 5-amino-1-(5-phospho-beta-D-ribosyl)imidazole + ADP + phosphate + H(+). It participates in purine metabolism; IMP biosynthesis via de novo pathway; 5-amino-1-(5-phospho-D-ribosyl)imidazole from N(2)-formyl-N(1)-(5-phospho-D-ribosyl)glycinamide: step 2/2. The chain is Phosphoribosylformylglycinamidine cyclo-ligase from Listeria monocytogenes serotype 4b (strain CLIP80459).